Consider the following 554-residue polypeptide: 3-(3-hydroxy-phenyl)propionate/3-hydroxycinnamic acid hydroxylase (554 aa).

FAD-binding positions include 17 to 46 (QVAI…VVEK) and 285 to 295 (FRIDRVLLAGD).

The protein belongs to the PheA/TfdB FAD monooxygenase family. Requires FAD as cofactor.

The enzyme catalyses 3-(3-hydroxyphenyl)propanoate + NADH + O2 + H(+) = 3-(2,3-dihydroxyphenyl)propanoate + NAD(+) + H2O. The catalysed reaction is (2E)-3-(3-hydroxyphenyl)prop-2-enoate + NADH + O2 + H(+) = (2E)-3-(2,3-dihydroxyphenyl)prop-2-enoate + NAD(+) + H2O. It functions in the pathway aromatic compound metabolism; 3-phenylpropanoate degradation. Catalyzes the insertion of one atom of molecular oxygen into position 2 of the phenyl ring of 3-(3-hydroxyphenyl)propionate (3-HPP) and hydroxycinnamic acid (3HCI). The chain is 3-(3-hydroxy-phenyl)propionate/3-hydroxycinnamic acid hydroxylase from Escherichia coli (strain 55989 / EAEC).